Consider the following 105-residue polypeptide: Cell division protein FtsB (105 aa).

Residues 1–3 (MKP) lie on the Cytoplasmic side of the membrane. A helical membrane pass occupies residues 4-21 (FVLVLFALLALLQYRLWF). Residues 22–105 (GENSLTEYFT…RSSEQSQDNQ (84 aa)) lie on the Periplasmic side of the membrane. A coiled-coil region spans residues 38–75 (HQQSGNAELLERNEVLKEEIQDLKSGTEALEERARNEL).

The protein belongs to the FtsB family. Part of a complex composed of FtsB, FtsL and FtsQ.

It localises to the cell inner membrane. Functionally, essential cell division protein. May link together the upstream cell division proteins, which are predominantly cytoplasmic, with the downstream cell division proteins, which are predominantly periplasmic. This Shewanella amazonensis (strain ATCC BAA-1098 / SB2B) protein is Cell division protein FtsB.